Consider the following 135-residue polypeptide: Integration host factor subunit beta (135 aa).

Residues 83-92 (GKELRERVDR) are compositionally biased toward basic and acidic residues. The segment at 83–135 (GKELRERVDRTVTQGGGMNGNGHAPHGKTGQSQLGSQSPASLHDDGQLNLVRS) is disordered. The span at 111 to 122 (TGQSQLGSQSPA) shows a compositional bias: polar residues.

It belongs to the bacterial histone-like protein family. In terms of assembly, heterodimer of an alpha and a beta chain.

In terms of biological role, this protein is one of the two subunits of integration host factor, a specific DNA-binding protein that functions in genetic recombination as well as in transcriptional and translational control. The chain is Integration host factor subunit beta from Cupriavidus metallidurans (strain ATCC 43123 / DSM 2839 / NBRC 102507 / CH34) (Ralstonia metallidurans).